A 372-amino-acid polypeptide reads, in one-letter code: Nickel transporter NicT (372 aa).

The next 8 helical transmembrane spans lie at 30-50 (LMFA…TLLV), 55-75 (LSLG…TLGL), 104-124 (VGFF…VMLV), 152-172 (ISGA…VGIV), 218-238 (VGFL…LVLA), 245-265 (GLPW…MCLL), 294-314 (VTGL…LGLI), and 335-355 (TVGF…LLVW).

It belongs to the NiCoT transporter (TC 2.A.52) family.

Its subcellular location is the cell membrane. The catalysed reaction is Ni(2+)(in) = Ni(2+)(out). Its activity is regulated as follows. Export of the fluoroquinolone antibiotic norfloxacin is inhibited by the proton ionophore carbonyl cyanide m-chlorophenylhydrazone (CCCP). Nickel may influence the extrusion of antibiotics possibly by facilitating the proton motive force-dependent efflux process. Functionally, involved in nickel uptake. In addition, acts as a drug efflux pump and contributes to moderate tolerance towards different classes of antibiotics, including fluoroquinolones, aminoglycosides and the anti-TB drug isoniazid, with a preference for fluoroquinolones. The drug efflux function is probably dependent on proton motive force (pmf) or ion gradient, and might be facilitated by the presence of Ni(2+) ions. This is Nickel transporter NicT from Mycobacterium tuberculosis (strain ATCC 25618 / H37Rv).